We begin with the raw amino-acid sequence, 764 residues long: 5-methyltetrahydropteroyltriglutamate--homocysteine methyltransferase (764 aa).

5-methyltetrahydropteroyltri-L-glutamate is bound by residues 19-22 and Lys-113; that span reads RELK. L-homocysteine-binding positions include 435–437 and Glu-488; that span reads IGS. L-methionine contacts are provided by residues 435–437 and Glu-488; that span reads IGS. 5-methyltetrahydropteroyltri-L-glutamate is bound by residues 519–520 and Trp-565; that span reads RC. Asp-603 contacts L-homocysteine. Asp-603 provides a ligand contact to L-methionine. 5-methyltetrahydropteroyltri-L-glutamate is bound at residue Glu-609. Positions 645, 647, and 669 each coordinate Zn(2+). The active-site Proton donor is His-698. Zn(2+) is bound at residue Cys-730.

Belongs to the vitamin-B12 independent methionine synthase family. Requires Zn(2+) as cofactor.

It carries out the reaction 5-methyltetrahydropteroyltri-L-glutamate + L-homocysteine = tetrahydropteroyltri-L-glutamate + L-methionine. Its pathway is amino-acid biosynthesis; L-methionine biosynthesis via de novo pathway; L-methionine from L-homocysteine (MetE route): step 1/1. Functionally, catalyzes the transfer of a methyl group from 5-methyltetrahydrofolate to homocysteine resulting in methionine formation. The chain is 5-methyltetrahydropteroyltriglutamate--homocysteine methyltransferase from Desulforamulus reducens (strain ATCC BAA-1160 / DSM 100696 / MI-1) (Desulfotomaculum reducens).